The chain runs to 1129 residues: Phytochrome A (1129 aa).

Positions 217–399 constitute a GAF domain; it reads SMERLCDTMV…VFAIHVSKEL (183 aa). Residue C322 participates in phytochromobilin binding. 2 consecutive PAS domains span residues 622-692 and 755-826; these read VTSE…LQGK and DYKA…VNLG. Positions 906–1123 constitute a Histidine kinase domain; sequence YLRRQAKNPL…TFIITVELAA (218 aa).

The protein belongs to the phytochrome family. In terms of assembly, homodimer. Post-translationally, contains one covalently linked phytochromobilin chromophore.

Regulatory photoreceptor which exists in two forms that are reversibly interconvertible by light: the Pr form that absorbs maximally in the red region of the spectrum and the Pfr form that absorbs maximally in the far-red region. Photoconversion of Pr to Pfr induces an array of morphogenic responses, whereas reconversion of Pfr to Pr cancels the induction of those responses. Pfr controls the expression of a number of nuclear genes including those encoding the small subunit of ribulose-bisphosphate carboxylase, chlorophyll A/B binding protein, protochlorophyllide reductase, rRNA, etc. It also controls the expression of its own gene(s) in a negative feedback fashion. The sequence is that of Phytochrome A (PHYA) from Petroselinum crispum (Parsley).